The primary structure comprises 98 residues: Citrate lyase acyl carrier protein (98 aa).

An O-(phosphoribosyl dephospho-coenzyme A)serine modification is found at serine 14.

The protein belongs to the CitD family. As to quaternary structure, oligomer with a subunit composition of (alpha,beta,gamma)6.

The protein resides in the cytoplasm. Its function is as follows. Covalent carrier of the coenzyme of citrate lyase. The sequence is that of Citrate lyase acyl carrier protein from Shigella flexneri.